Reading from the N-terminus, the 446-residue chain is Exodeoxyribonuclease 7 large subunit (446 aa).

It belongs to the XseA family. As to quaternary structure, heterooligomer composed of large and small subunits.

It localises to the cytoplasm. The enzyme catalyses Exonucleolytic cleavage in either 5'- to 3'- or 3'- to 5'-direction to yield nucleoside 5'-phosphates.. Its function is as follows. Bidirectionally degrades single-stranded DNA into large acid-insoluble oligonucleotides, which are then degraded further into small acid-soluble oligonucleotides. The sequence is that of Exodeoxyribonuclease 7 large subunit from Streptococcus agalactiae serotype Ia (strain ATCC 27591 / A909 / CDC SS700).